A 459-amino-acid chain; its full sequence is Putrescine aminotransferase (459 aa).

Residues Gly150–Thr151 and Gln274 contribute to the pyridoxal 5'-phosphate site. Lys300 carries the N6-(pyridoxal phosphate)lysine modification. A pyridoxal 5'-phosphate-binding site is contributed by Thr332.

This sequence belongs to the class-III pyridoxal-phosphate-dependent aminotransferase family. Putrescine aminotransferase subfamily. The cofactor is pyridoxal 5'-phosphate.

The enzyme catalyses an alkane-alpha,omega-diamine + 2-oxoglutarate = an omega-aminoaldehyde + L-glutamate. It catalyses the reaction putrescine + 2-oxoglutarate = 1-pyrroline + L-glutamate + H2O. The catalysed reaction is cadaverine + 2-oxoglutarate = 5-aminopentanal + L-glutamate. It functions in the pathway amine and polyamine degradation; putrescine degradation; 4-aminobutanal from putrescine (transaminase route): step 1/1. Catalyzes the aminotransferase reaction from putrescine to 2-oxoglutarate, leading to glutamate and 4-aminobutanal, which spontaneously cyclizes to form 1-pyrroline. This is the first step in one of two pathways for putrescine degradation, where putrescine is converted into 4-aminobutanoate (gamma-aminobutyrate or GABA) via 4-aminobutanal. Also functions as a cadaverine transaminase in a a L-lysine degradation pathway to succinate that proceeds via cadaverine, glutarate and L-2-hydroxyglutarate. The polypeptide is Putrescine aminotransferase (Salmonella heidelberg (strain SL476)).